The following is a 293-amino-acid chain: Small ribosomal subunit protein uS2 (293 aa).

The tract at residues I219–A293 is disordered.

The protein belongs to the universal ribosomal protein uS2 family. As to quaternary structure, component of the small ribosomal subunit. Mature ribosomes consist of a small (40S) and a large (60S) subunit. The 40S subunit contains about 33 different proteins and 1 molecule of RNA (18S). The 60S subunit contains about 49 different proteins and 3 molecules of RNA (28S, 5.8S and 5S). Interacts with ribosomal protein S21.

The protein resides in the cytoplasm. In terms of biological role, required for the assembly and/or stability of the 40S ribosomal subunit. Required for the processing of the 20S rRNA-precursor to mature 18S rRNA in a late step of the maturation of 40S ribosomal subunits. This chain is Small ribosomal subunit protein uS2, found in Hydra viridissima (Green hydra).